The sequence spans 106 residues: Phosphoribosyl-ATP pyrophosphatase (106 aa).

Belongs to the PRA-PH family.

It is found in the cytoplasm. The enzyme catalyses 1-(5-phospho-beta-D-ribosyl)-ATP + H2O = 1-(5-phospho-beta-D-ribosyl)-5'-AMP + diphosphate + H(+). It participates in amino-acid biosynthesis; L-histidine biosynthesis; L-histidine from 5-phospho-alpha-D-ribose 1-diphosphate: step 2/9. This is Phosphoribosyl-ATP pyrophosphatase from Limosilactobacillus fermentum (strain NBRC 3956 / LMG 18251) (Lactobacillus fermentum).